A 352-amino-acid polypeptide reads, in one-letter code: MRGNRLVEFPDDFWIPIPLDTNNVTALSPFLVPQDHLGSPTIFYSMSALMFVLFVAGTAINLLTIACTLQYKKLRSHLNYILVNMAVANLIVASTGSSTCFVCFAFKYMVLGPLGCKIEGFTAALGGMVSLWSLAVIAFERWLVICKPLGNFVFKSEHALLCCALTWVCGLCASVPPLVGWSRYIPEGMQCSCGPDWYTTGNKFNNESFVMFLFCFCFAVPFSIIVFCYSQLLFTLKMAAKAQADSASTQKAEKEVTRMVVVMVVAFLVCYVPYASFALWVINNRGQTFDLRLATIPSCVSKASTVYNPVIYVLLNKQFRLCMKKMLGMSADEDEESSTSQSTTEVSKVGPS.

The Extracellular segment spans residues 1–42 (MRGNRLVEFPDDFWIPIPLDTNNVTALSPFLVPQDHLGSPTI). N-linked (GlcNAc...) asparagine glycosylation is present at N23. A helical transmembrane segment spans residues 43 to 67 (FYSMSALMFVLFVAGTAINLLTIAC). The Cytoplasmic segment spans residues 68-79 (TLQYKKLRSHLN). A helical transmembrane segment spans residues 80–105 (YILVNMAVANLIVASTGSSTCFVCFA). Topologically, residues 106–119 (FKYMVLGPLGCKIE) are extracellular. A disulfide bridge links C116 with C193. The chain crosses the membrane as a helical span at residues 120-139 (GFTAALGGMVSLWSLAVIAF). Residues 140 to 158 (ERWLVICKPLGNFVFKSEH) lie on the Cytoplasmic side of the membrane. The helical transmembrane segment at 159–182 (ALLCCALTWVCGLCASVPPLVGWS) threads the bilayer. Over 183-208 (RYIPEGMQCSCGPDWYTTGNKFNNES) the chain is Extracellular. A glycan (N-linked (GlcNAc...) asparagine) is linked at N206. The helical transmembrane segment at 209 to 236 (FVMFLFCFCFAVPFSIIVFCYSQLLFTL) threads the bilayer. Residues 237-258 (KMAAKAQADSASTQKAEKEVTR) are Cytoplasmic-facing. A helical membrane pass occupies residues 259-282 (MVVVMVVAFLVCYVPYASFALWVI). Topologically, residues 283-290 (NNRGQTFD) are extracellular. Residues 291 to 315 (LRLATIPSCVSKASTVYNPVIYVLL) form a helical membrane-spanning segment. An N6-(retinylidene)lysine modification is found at K302. Topologically, residues 316–352 (NKQFRLCMKKMLGMSADEDEESSTSQSTTEVSKVGPS) are cytoplasmic. Positions 332–352 (DEDEESSTSQSTTEVSKVGPS) are disordered.

The protein belongs to the G-protein coupled receptor 1 family. Opsin subfamily. Post-translationally, phosphorylated on some or all of the serine and threonine residues present in the C-terminal region. In terms of tissue distribution, the color pigments are found in the cone photoreceptor cells.

The protein localises to the membrane. Functionally, visual pigments are the light-absorbing molecules that mediate vision. They consist of an apoprotein, opsin, covalently linked to cis-retinal. This Oryzias latipes (Japanese rice fish) protein is Blue-sensitive opsin.